Reading from the N-terminus, the 157-residue chain is MSRNEAPEQRTTQPDPVYRDDMVSRFVNAIMRDGKKSLARRIVYDTFDVIEERTGEEEGLEVFKKAVNNAAPLVEVRSRRVGGATYQVPTEVRPERRITLAFRWIIQYARARNEKSMVNRLASELVDAARGEGGAVKKKDDTHRMAESNKAFAHFQF.

It belongs to the universal ribosomal protein uS7 family. Part of the 30S ribosomal subunit. Contacts proteins S9 and S11.

Functionally, one of the primary rRNA binding proteins, it binds directly to 16S rRNA where it nucleates assembly of the head domain of the 30S subunit. Is located at the subunit interface close to the decoding center, probably blocks exit of the E-site tRNA. This is Small ribosomal subunit protein uS7 from Salinibacter ruber (strain DSM 13855 / M31).